The chain runs to 258 residues: Trans-aconitate 2-methyltransferase (258 aa).

The protein belongs to the methyltransferase superfamily. Tam family.

It is found in the cytoplasm. It carries out the reaction trans-aconitate + S-adenosyl-L-methionine = (E)-3-(methoxycarbonyl)pent-2-enedioate + S-adenosyl-L-homocysteine. Its function is as follows. Catalyzes the S-adenosylmethionine monomethyl esterification of trans-aconitate. In Acidovorax ebreus (strain TPSY) (Diaphorobacter sp. (strain TPSY)), this protein is Trans-aconitate 2-methyltransferase.